Consider the following 200-residue polypeptide: Recombination protein RecR (200 aa).

Residues 58–75 form a C4-type zinc finger; it reads CSTCFCLKNLPESNCEFC. The Toprim domain maps to 82–177; the sequence is STLCIVATPK…SISRLALGLP (96 aa).

It belongs to the RecR family.

In terms of biological role, may play a role in DNA repair. It seems to be involved in an RecBC-independent recombinational process of DNA repair. It may act with RecF and RecO. The chain is Recombination protein RecR from Chlamydia caviae (strain ATCC VR-813 / DSM 19441 / 03DC25 / GPIC) (Chlamydophila caviae).